The following is a 520-amino-acid chain: Maturase K (520 aa).

This sequence belongs to the intron maturase 2 family. MatK subfamily.

Its subcellular location is the plastid. It is found in the chloroplast. In terms of biological role, usually encoded in the trnK tRNA gene intron. Probably assists in splicing its own and other chloroplast group II introns. This Iris cristata (Dwarf crested iris) protein is Maturase K.